The sequence spans 79 residues: uncharacterized protein (79 aa).

The signal sequence occupies residues 1 to 24 (MKMNPCTVILCKSLFFFCLFQVDC). Asparagine 33 is a glycosylation site (N-linked (GlcNAc...) asparagine).

It localises to the secreted. This is an uncharacterized protein from Saccharomyces cerevisiae (strain ATCC 204508 / S288c) (Baker's yeast).